The chain runs to 227 residues: DNA repair protein RecO (227 aa).

It belongs to the RecO family.

Involved in DNA repair and RecF pathway recombination. The protein is DNA repair protein RecO of Pseudomonas putida (strain GB-1).